The primary structure comprises 374 residues: MRSGRFIGVMSGTSLDGIDVVLATITENMVAQQASLTWPIPHAIKEEILAICQGQSLTLSQLGRLDTRLGRLFADAVLALMRQESLKPTDVIAIGCHGQTVWHEPQGEAPHTLQIGDNNQIAAHTGITVVGDFRRRDMALGGQGAPLVPAFHHALLAHPVERRMVLNIGGIANVSLLAPGQPVRGYDTGPGNMLLDAWIWRQKGKPYDKDAQWASEGKVLLPLLQDMLSDPWFALPAPKSTGREYFNYGWLEQHMARYPGLRGEDVQATLAELTAVTISEQVLLSGGCERLLVCGGGARNPLLMARLAALLPGTEVSTTDEAGISGDDMEALAFAWLAWRTLAGLPGNLPSVTGASEASVLGAIFPANPPQNRS.

12 to 19 (GTSLDGID) contacts ATP.

It belongs to the anhydro-N-acetylmuramic acid kinase family.

It catalyses the reaction 1,6-anhydro-N-acetyl-beta-muramate + ATP + H2O = N-acetyl-D-muramate 6-phosphate + ADP + H(+). Its pathway is amino-sugar metabolism; 1,6-anhydro-N-acetylmuramate degradation. It participates in cell wall biogenesis; peptidoglycan recycling. Functionally, catalyzes the specific phosphorylation of 1,6-anhydro-N-acetylmuramic acid (anhMurNAc) with the simultaneous cleavage of the 1,6-anhydro ring, generating MurNAc-6-P. Is required for the utilization of anhMurNAc either imported from the medium or derived from its own cell wall murein, and thus plays a role in cell wall recycling. The sequence is that of Anhydro-N-acetylmuramic acid kinase from Klebsiella pneumoniae subsp. pneumoniae (strain ATCC 700721 / MGH 78578).